The following is a 109-amino-acid chain: MTAPKSKKSGDNVNAKLGLAIKSGKYTLGYKSTIKALRQGKAKLVIIAGNTPALRKSEIEYYAMLAKCTVHHFQGGNNELGTSCGRLFRVGAVTIMDAGDSDILTAELS.

Belongs to the eukaryotic ribosomal protein eL30 family.

The sequence is that of Large ribosomal subunit protein eL30 (RPL30) from Yarrowia lipolytica (strain CLIB 122 / E 150) (Yeast).